A 179-amino-acid chain; its full sequence is MPSKSLVMEYLAHPSTLGLAVGVACGMCLGWSLRVCFGMLPKSKTSKTHTDTESEASILGDSGEYKMILVVRNDLKMGKGKVAAQCSHAAVSAYKQIQRRNPEMLKQWEYCGQPKVVVKAPDEETLIALLAHAKMLGLTVSLIQDAGRTQIAPGSQTVLGIGPGPADLIDKVTGHLKLY.

A helical membrane pass occupies residues 15-37; sequence STLGLAVGVACGMCLGWSLRVCF. Glycyl lysine isopeptide (Lys-Gly) (interchain with G-Cter in ubiquitin) cross-links involve residues Lys-47, Lys-76, Lys-81, Lys-95, Lys-106, Lys-115, Lys-171, and Lys-177.

The protein belongs to the PTH2 family. In terms of assembly, monomer. Ubiquitinated by PRKN during mitophagy, leading to its degradation and enhancement of mitophagy. Deubiquitinated by USP30.

It localises to the mitochondrion outer membrane. It catalyses the reaction an N-acyl-L-alpha-aminoacyl-tRNA + H2O = an N-acyl-L-amino acid + a tRNA + H(+). In terms of biological role, peptidyl-tRNA hydrolase which releases tRNAs from the ribosome during protein synthesis. Promotes caspase-independent apoptosis by regulating the function of two transcriptional regulators, AES and TLE1. This is Peptidyl-tRNA hydrolase 2, mitochondrial (PTRH2) from Homo sapiens (Human).